Reading from the N-terminus, the 266-residue chain is HLA class II histocompatibility antigen, DRB1 beta chain (266 aa).

Residues 1 to 29 (MVCLKLPGGSCMTALTVTLMVLSSPLALS) form the signal peptide. The tract at residues 30–124 (GDTRPRFLWQ…VESFTVQRRV (95 aa)) is beta-1. Topologically, residues 30-227 (GDTRPRFLWQ…RARSESAQSK (198 aa)) are extracellular. A disulfide bridge connects residues cysteine 44 and cysteine 108. Asparagine 48 is a glycosylation site (N-linked (GlcNAc...) asparagine). A peptide antigen contacts are provided by aspartate 86, tryptophan 90, histidine 110, asparagine 111, and arginine 122. The tract at residues 125–227 (QPKVTVYPSK…RARSESAQSK (103 aa)) is beta-2. The 89-residue stretch at 126-214 (PKVTVYPSKT…EHPSVTSPLT (89 aa)) folds into the Ig-like C1-type domain. Cysteines 146 and 202 form a disulfide. A helical membrane pass occupies residues 228–248 (MLSGVGGFVLGLLFLGAGLFI). Topologically, residues 249 to 266 (YFRNQKGHSGLQPTGFLS) are cytoplasmic. Lysine 254 participates in a covalent cross-link: Glycyl lysine isopeptide (Lys-Gly) (interchain with G-Cter in ubiquitin).

As to quaternary structure, heterotrimer that consists of an alpha chain HLA-DRA, a beta chain HLA-DRB1 and a peptide (peptide-MHCII). Newly synthesized alpha and beta chains forms a heterodimer (MHCII) that associates with the CD74/invariant chain (Ii) in the endoplasmic reticulum (ER). Ii is a trimer composed of three subunits and each subunit interacts with one MHCII dimer, blocking the peptide-binding cleft. As a result, MHCII molecules cannot bind peptides present in the ER. The complex of MHCII and CD74/Ii is transported in vesicles from ER to Golgi to lysosomes, where it encounters antigenic peptides generated via proteolysis of endocytosed antigens. MHCII dimers are dissociated from CD74/Ii by the combined action of proteolysis and HLA-DM. Lysosomal enzymes such as cathepsin, degrade CD74/Ii leaving a 24 amino acid remnant called class II-associated Ii or CLIP. Interacts (via the peptide binding cleft) with CLIP; this interaction inhibits antigen peptide binding before entry in the endosomal compartment. The displacement of CLIP and replacement by a high affinity peptide in lysosomes is performed by HLA-DM heterodimer. HLA-DM catalyzes CLIP dissociation from MHCII, stabilizes empty MHCII and mediates the selection of high affinity peptides. Interacts with HLA-DM heterodimer; this interaction is direct. Interacts with TCR (via CDR3). Interacts (via beta-2 domain) with CD4 coreceptor (via Ig-like V-type domain); this interaction is of exceptionally low affinity yet necessary for optimal recognition of antigenic peptides. In terms of assembly, (Microbial infection) Interacts with Staphylococcus aureus enterotoxin A/entA, enterotoxin B/entB, enterotoxin C1/entC1, enterotoxin D/entD and enterotoxin H/entH. Enterotoxins bind outside the peptide-binding cleft of MHCII: enterotoxin H/entH interacts via the beta-1 domain of MHCII and in a zinc-dependent way, whereas enterotoxin B/entB interacts primarily via the alpha-1 domain. (Microbial infection) Interacts with Epstein-Barr virus gp42 protein. In terms of processing, ubiquitinated by MARCHF1 and MARCHF8 at Lys-254 leading to sorting into the endosome system and down-regulation of MHCII. In terms of tissue distribution, expressed in professional APCs: monocyte/macrophages, dendritic cells and B cells (at protein level). Expressed in thymic epithelial cells (at protein level).

The protein localises to the cell membrane. It localises to the endoplasmic reticulum membrane. The protein resides in the lysosome membrane. Its subcellular location is the late endosome membrane. It is found in the autolysosome membrane. In terms of biological role, a beta chain of antigen-presenting major histocompatibility complex class II (MHCII) molecule. In complex with the alpha chain HLA-DRA, displays antigenic peptides on professional antigen presenting cells (APCs) for recognition by alpha-beta T cell receptor (TCR) on HLA-DRB1-restricted CD4-positive T cells. This guides antigen-specific T-helper effector functions, both antibody-mediated immune response and macrophage activation, to ultimately eliminate the infectious agents and transformed cells. Typically presents extracellular peptide antigens of 10 to 30 amino acids that arise from proteolysis of endocytosed antigens in lysosomes. In the tumor microenvironment, presents antigenic peptides that are primarily generated in tumor-resident APCs likely via phagocytosis of apoptotic tumor cells or macropinocytosis of secreted tumor proteins. Presents peptides derived from intracellular proteins that are trapped in autolysosomes after macroautophagy, a mechanism especially relevant for T cell selection in the thymus and central immune tolerance. The selection of the immunodominant epitopes follows two processing modes: 'bind first, cut/trim later' for pathogen-derived antigenic peptides and 'cut first, bind later' for autoantigens/self-peptides. The anchor residue at position 1 of the peptide N-terminus, usually a large hydrophobic residue, is essential for high affinity interaction with MHCII molecules. Its function is as follows. Allele DRB1*01:01: Displays an immunodominant epitope derived from Bacillus anthracis pagA/protective antigen, PA (KLPLYISNPNYKVNVYAVT), to both naive and PA-specific memory CD4-positive T cells. Presents immunodominant HIV-1 gag peptide (FRDYVDRFYKTLRAEQASQE) on infected dendritic cells for recognition by TRAV24-TRBV2 TCR on CD4-positive T cells and controls viral load. May present to T-helper 1 cells several HRV-16 epitopes derived from capsid proteins VP1 (PRFSLPFLSIASAYYMFYDG) and VP2 (PHQFINLRSNNSATLIVPYV), contributing to viral clearance. Displays commonly recognized peptides derived from IAV external protein HA (PKYVKQNTLKLAT and SNGNFIAPEYAYKIVK) and from internal proteins M, NP and PB1, with M-derived epitope (GLIYNRMGAVTTEV) being the most immunogenic. Presents a self-peptide derived from COL4A3 (GWISLWKGFSF) to TCR (TRAV14 biased) on CD4-positive, FOXP3-positive regulatory T cells and mediates immune tolerance to self. May present peptides derived from oncofetal trophoblast glycoprotein TPBG 5T4, known to be recognized by both T-helper 1 and regulatory T cells. Displays with low affinity a self-peptide derived from MBP (VHFFKNIVTPRTP). Allele DRB1*03:01: May present to T-helper 1 cells an HRV-16 epitope derived from capsid protein VP2 (NEKQPSDDNWLNFDGTLLGN), contributing to viral clearance. Displays self-peptides derived from retinal SAG (NRERRGIALDGKIKHE) and thyroid TG (LSSVVVDPSIRHFDV). Presents viral epitopes derived from HHV-6B gH/U48 and U85 antigens to polyfunctional CD4-positive T cells with cytotoxic activity implicated in control of HHV-6B infection. Presents several immunogenic epitopes derived from C.tetani neurotoxin tetX, playing a role in immune recognition and long-term protection. Functionally, allele DRB1*04:01: Presents an immunodominant bacterial epitope derived from M.tuberculosis esxB/culture filtrate antigen CFP-10 (EISTNIRQAGVQYSR), eliciting CD4-positive T cell effector functions such as IFNG production and cytotoxic activity. May present to T-helper 1 cells an HRV-16 epitope derived from capsid protein VP2 (NEKQPSDDNWLNFDGTLLGN), contributing to viral clearance. Presents tumor epitopes derived from melanoma-associated TYR antigen (QNILLSNAPLGPQFP and DYSYLQDSDPDSFQD), triggering CD4-positive T cell effector functions such as GMCSF production. Displays preferentially citrullinated self-peptides derived from VIM (GVYATR/citSSAVR and SAVRAR/citSSVPGVR) and ACAN (VVLLVATEGR/ CitVRVNSAYQDK). Displays self-peptides derived from COL2A1. In terms of biological role, allele DRB1*04:02: Displays native or citrullinated self-peptides derived from VIM. Its function is as follows. Allele DRB1*04:04: May present to T-helper 1 cells several HRV-16 epitopes derived from capsid proteins VP1 (HIVMQYMYVPPGAPIPTTRN) and VP2 (RGDSTITSQDVANAVVGYGV), contributing to viral clearance. Displays preferentially citrullinated self-peptides derived from VIM (SAVRAR/citSSVPGVR). Allele DRB1*04:05: May present to T-helper 1 cells an immunogenic epitope derived from tumor-associated antigen WT1 (KRYFKLSHLQMHSRKH), likely providing for effective antitumor immunity in a wide range of solid and hematological malignancies. Functionally, allele DRB1*05:01: Presents an immunodominant HIV-1 gag peptide (FRDYVDRFYKTLRAEQASQE) on infected dendritic cells for recognition by TRAV24-TRBV2 TCR on CD4-positive T cells and controls viral load. In terms of biological role, allele DRB1*07:01: Upon EBV infection, presents latent antigen EBNA2 peptide (PRSPTVFYNIPPMPLPPSQL) to CD4-positive T cells, driving oligoclonal expansion and selection of a dominant virus-specific memory T cell subset with cytotoxic potential to directly eliminate virus-infected B cells. May present to T-helper 1 cells several HRV-16 epitopes derived from capsid proteins VP1 (PRFSLPFLSIASAYYMFYDG) and VP2 (VPYVNAVPMDSMVRHNNWSL), contributing to viral clearance. In the context of tumor immunesurveillance, may present to T-helper 1 cells an immunogenic epitope derived from tumor-associated antigen WT1 (MTEYKLVVVGAVGVGKSALTIQLI), likely providing for effective antitumor immunity in a wide range of solid and hematological malignancies. In metastatic epithelial tumors, presents to intratumoral CD4-positive T cells a KRAS neoantigen (MTEYKLVVVGAVGVGKSALTIQLI) carrying G12V hotspot driver mutation and may mediate tumor regression. Its function is as follows. Allele DRB1*11:01: Displays an immunodominant HIV-1 gag peptide (FRDYVDRFYKTLRAEQASQE) on infected dendritic cells for recognition by TRAV24-TRBV2 TCR on CD4-positive T cells and controls viral load. May present to T-helper 1 cells an HRV-16 epitope derived from capsid protein VP2 (SDRIIQITRGDSTITSQDVA), contributing to viral clearance. Presents several immunogenic epitopes derived from C.tetani neurotoxin tetX, playing a role in immune recognition and longterm protection. In the context of tumor immunesurveillance, may present tumor-derived neoantigens to CD4-positive T cells and trigger anti-tumor helper functions. Allele DRB1*13:01: Presents viral epitopes derived from HHV-6B antigens to polyfunctional CD4-positive T cells implicated in control of HHV-6B infection. Functionally, allele DRB1*15:01: May present to T-helper 1 cells an HRV-16 epitope derived from capsid protein VP2 (SNNSATLIVPYVNAVPMDSM), contributing to viral clearance. Displays a self-peptide derived from MBP (ENPVVHFFKNIVTPR). May present to T-helper 1 cells an immunogenic epitope derived from tumor-associated antigen WT1 (KRYFKLSHLQMHSRKH), likely providing for effective antitumor immunity in a wide range of solid and hematological malignancies. In terms of biological role, allele DRB1*15:02: Displays an immunodominant HIV-1 gag peptide (FRDYVDRFYKTLRAEQASQE) on infected dendritic cells for recognition by TRAV24-TRBV2 TCR on CD4-positive T cells and controls viral load. May present to T-helper 1 cells an immunogenic epitope derived from tumor-associated antigen WT1 (KRYFKLSHLQMHSRKH), likely providing for effective antitumor immunity in a wide range of solid and hematological malignancies. Its function is as follows. (Microbial infection) Acts as a receptor for Epstein-Barr virus on lymphocytes. The polypeptide is HLA class II histocompatibility antigen, DRB1 beta chain (Homo sapiens (Human)).